The primary structure comprises 725 residues: Catalase-peroxidase (725 aa).

The tryptophyl-tyrosyl-methioninium (Trp-Tyr) (with M-252) cross-link spans 98–226 (WHMAGSYRTS…LAAVQMGLIY (129 aa)). H99 functions as the Proton acceptor in the catalytic mechanism. Residues 226-252 (YVNPEGVNGKSDPQATAYQMRETFARM) constitute a cross-link (tryptophyl-tyrosyl-methioninium (Tyr-Met) (with W-98)). H267 contacts heme b.

The protein belongs to the peroxidase family. Peroxidase/catalase subfamily. Homodimer or homotetramer. Heme b is required as a cofactor. In terms of processing, formation of the three residue Trp-Tyr-Met cross-link is important for the catalase, but not the peroxidase activity of the enzyme.

It catalyses the reaction H2O2 + AH2 = A + 2 H2O. It carries out the reaction 2 H2O2 = O2 + 2 H2O. Bifunctional enzyme with both catalase and broad-spectrum peroxidase activity. This Paracoccus denitrificans (strain Pd 1222) protein is Catalase-peroxidase.